We begin with the raw amino-acid sequence, 228 residues long: Eukaryotic translation initiation factor 6 (228 aa).

This sequence belongs to the eIF-6 family. As to quaternary structure, monomer. Associates with the 60S ribosomal subunit.

It localises to the cytoplasm. Its subcellular location is the nucleus. The protein resides in the nucleolus. Binds to the 60S ribosomal subunit and prevents its association with the 40S ribosomal subunit to form the 80S initiation complex in the cytoplasm. May also be involved in ribosome biogenesis. The chain is Eukaryotic translation initiation factor 6 from Guillardia theta (Cryptophyte).